Consider the following 38-residue polypeptide: Beta-defensin 1 (38 aa).

Disulfide bonds link cysteine 5/cysteine 34, cysteine 12/cysteine 27, and cysteine 17/cysteine 35.

This sequence belongs to the beta-defensin family. Monomer. Homodimer. Neutrophilic granules.

The protein resides in the secreted. It localises to the membrane. In terms of biological role, has bactericidal activity. Active against E.coli ML35 but not against S.aureus 502A. May act as a ligand for C-C chemokine receptor CCR6. Positively regulates the sperm motility and bactericidal activity in a CCR6-dependent manner. Binds to CCR6 and triggers Ca2+ mobilization in the sperm which is important for its motility. This Bos taurus (Bovine) protein is Beta-defensin 1 (DEFB1).